The following is a 180-amino-acid chain: MNAAQLSDWHPAPSSISPRARGWLQNRGSLTQLIQRRCCSEFSVKPVFQSLATVCDDELAVMNLRRDELALVREVYLYCGETPVVFAHSVVARKHLRGAWRSLIGLGNKSLGTVLFTNPVVKRTPLRFKKLTAAHPLFSRACRKLRVQPGNLWARRSLFTLHGQSILVTEVFLPSILELA.

The substrate site is built by arginine 73, leucine 111, and glutamate 170.

The protein belongs to the UbiC family.

It localises to the cytoplasm. The enzyme catalyses chorismate = 4-hydroxybenzoate + pyruvate. The protein operates within cofactor biosynthesis; ubiquinone biosynthesis. Its function is as follows. Removes the pyruvyl group from chorismate, with concomitant aromatization of the ring, to provide 4-hydroxybenzoate (4HB) for the ubiquinone pathway. The sequence is that of Probable chorismate pyruvate-lyase from Nitrosospira multiformis (strain ATCC 25196 / NCIMB 11849 / C 71).